A 126-amino-acid chain; its full sequence is Protein ApaG (126 aa).

One can recognise an ApaG domain in the interval 2 to 126 (DVSQPRIQIQ…FRLAVPNILN (125 aa)).

This is Protein ApaG from Vibrio vulnificus (strain CMCP6).